The primary structure comprises 193 residues: Peptidyl-tRNA hydrolase (193 aa).

Residue histidine 17 coordinates tRNA. The active-site Proton acceptor is histidine 22. TRNA contacts are provided by phenylalanine 68, asparagine 70, and asparagine 116.

Belongs to the PTH family. As to quaternary structure, monomer.

Its subcellular location is the cytoplasm. It catalyses the reaction an N-acyl-L-alpha-aminoacyl-tRNA + H2O = an N-acyl-L-amino acid + a tRNA + H(+). In terms of biological role, hydrolyzes ribosome-free peptidyl-tRNAs (with 1 or more amino acids incorporated), which drop off the ribosome during protein synthesis, or as a result of ribosome stalling. Catalyzes the release of premature peptidyl moieties from peptidyl-tRNA molecules trapped in stalled 50S ribosomal subunits, and thus maintains levels of free tRNAs and 50S ribosomes. The sequence is that of Peptidyl-tRNA hydrolase from Xanthomonas campestris pv. campestris (strain ATCC 33913 / DSM 3586 / NCPPB 528 / LMG 568 / P 25).